A 341-amino-acid polypeptide reads, in one-letter code: L-threonine 3-dehydrogenase (341 aa).

Residue C38 participates in Zn(2+) binding. Catalysis depends on charge relay system residues T40 and H43. The Zn(2+) site is built by H63, E64, C93, C96, C99, and C107. Residues I175, D195, R200, L262–I264, and I286–Y287 each bind NAD(+).

This sequence belongs to the zinc-containing alcohol dehydrogenase family. As to quaternary structure, homotetramer. The cofactor is Zn(2+).

Its subcellular location is the cytoplasm. The catalysed reaction is L-threonine + NAD(+) = (2S)-2-amino-3-oxobutanoate + NADH + H(+). Its pathway is amino-acid degradation; L-threonine degradation via oxydo-reductase pathway; glycine from L-threonine: step 1/2. Catalyzes the NAD(+)-dependent oxidation of L-threonine to 2-amino-3-ketobutyrate. This Yersinia pseudotuberculosis serotype O:1b (strain IP 31758) protein is L-threonine 3-dehydrogenase.